We begin with the raw amino-acid sequence, 397 residues long: Pectate lyase 4 (397 aa).

A signal peptide spans 1–25 (MGIKHCCYILYFTLALVTLVQAGRL). N36 carries an N-linked (GlcNAc...) asparagine glycan. A disulfide bond links C54 and C71. 3 PbH1 repeats span residues 159 to 202 (VKNV…HVTG), 203 to 224 (SSDI…VDVN), and 227 to 248 (STGV…LLGA). Ca(2+) is bound by residues D194, D218, and D222. R274 is an active-site residue.

Belongs to the polysaccharide lyase 1 family. Amb a subfamily. As to quaternary structure, monomer. Ca(2+) is required as a cofactor. In terms of processing, the N-terminus is blocked. Pollen and flowers.

The enzyme catalyses Eliminative cleavage of (1-&gt;4)-alpha-D-galacturonan to give oligosaccharides with 4-deoxy-alpha-D-galact-4-enuronosyl groups at their non-reducing ends.. Its pathway is glycan metabolism; pectin degradation; 2-dehydro-3-deoxy-D-gluconate from pectin: step 2/5. Has pectate lyase activity. This chain is Pectate lyase 4, found in Ambrosia artemisiifolia (Common ragweed).